Here is a 32-residue protein sequence, read N- to C-terminus: Cytochrome b6-f complex subunit 7 (32 aa).

A helical membrane pass occupies residues 9-29 (AILSSVLVLVGLAVGFLLLKV).

The protein belongs to the PetM family. The 4 large subunits of the cytochrome b6-f complex are cytochrome b6, subunit IV (17 kDa polypeptide, PetD), cytochrome f and the Rieske protein, while the 4 small subunits are PetG, PetL, PetM and PetN. The complex functions as a dimer.

It localises to the plastid. Its subcellular location is the chloroplast thylakoid membrane. Component of the cytochrome b6-f complex, which mediates electron transfer between photosystem II (PSII) and photosystem I (PSI), cyclic electron flow around PSI, and state transitions. This Porphyra purpurea (Red seaweed) protein is Cytochrome b6-f complex subunit 7.